The following is a 601-amino-acid chain: MIIARKKLQLQRLWRQRGCRVATYICLGVLVLFGFVYNSKGNSMSSIKSDSAAQQFDDLDDLTNKELPGGPDPNTIFRGSELGNYEPKEPEIPSNQPGEHGKPVPVTDEEGMAAGRAAEKEFGFNTYVSDMISMNRTIPDIRPEECKHWDYPEKLPTVSVVVVFHNEGWTPLLRTVHSVLLRSPPELIEQVVMVDDDSDKPHLKEKLDKYVTRFNGKVIVVRTEQREGLINARSIGAKHSTGEVVLFLDAHCEVNTNWLPPLLAPIKRNRKVMTVPVIDGIDSNSWEYRSVYGSPNAHHSGIFEWGLLYKETQITERETAHRKHNSQPFRSPTHAGGLFAINRLWFKELGYYDEGLQIWGGEQYELSFKIWQCGGGIVFVPCSHVGHVYRSHMPYSFGKFSGKPVISINMMRVVKTWMDDYSKYYLTREPQATNVNPGDISAQLALRDKLQCKSFKWYMENVAYDVLKSYPMLPPNDVWGEARNPATGKCLDRMGGIPGPMGATGCHGYGGNQLIRLNVQGQMAQGEWCLTANGIRIQANHCVKGTVNGFWSYDRKTKQIIHSQKRQCITVSESGSEVTLQTCTEDNERQKFVWKEFYQSS.

The Cytoplasmic portion of the chain corresponds to 1–20; the sequence is MIIARKKLQLQRLWRQRGCR. The chain crosses the membrane as a helical; Signal-anchor for type II membrane protein span at residues 21–38; the sequence is VATYICLGVLVLFGFVYN. The Lumenal segment spans residues 39–601; sequence SKGNSMSSIK…FVWKEFYQSS (563 aa). A disordered region spans residues 61 to 108; sequence DLTNKELPGGPDPNTIFRGSELGNYEPKEPEIPSNQPGEHGKPVPVTD. An N-linked (GlcNAc...) asparagine glycan is attached at Asn-135. 5 disulfide bridges follow: Cys-146-Cys-382, Cys-373-Cys-452, Cys-490-Cys-506, Cys-529-Cys-542, and Cys-568-Cys-583. A catalytic subdomain A region spans residues 155–265; it reads LPTVSVVVVF…TNWLPPLLAP (111 aa). Asp-196 and Arg-226 together coordinate substrate. Asp-249 and His-251 together coordinate Mn(2+). A catalytic subdomain B region spans residues 328-390; it reads PFRSPTHAGG…PCSHVGHVYR (63 aa). Trp-359 provides a ligand contact to substrate. A Mn(2+)-binding site is contributed by His-387. Substrate is bound by residues Arg-390 and Tyr-395. In terms of domain architecture, Ricin B-type lectin spans 477–595; it reads DVWGEARNPA…DNERQKFVWK (119 aa).

This sequence belongs to the glycosyltransferase 2 family. GalNAc-T subfamily. Requires Mn(2+) as cofactor.

It is found in the golgi apparatus membrane. It functions in the pathway protein modification; protein glycosylation. Probable glycopeptide transferase involved in O-linked oligosaccharide biosynthesis. Glycopeptide transferases catalyze the transfer of an N-acetyl-D-galactosamine residue to an already glycosylated peptide. In contrast to other members of the family, it does not act as a peptide transferase that transfers GalNAc onto serine or threonine residue on peptides that have been tested. Some peptide transferase activity is however not excluded, considering that its appropriate peptide substrate may remain unidentified. This Caenorhabditis elegans protein is Probable N-acetylgalactosaminyltransferase 7 (gly-7).